The sequence spans 137 residues: MSSGIALAPNCVSTFNDLKLGRKYGGIIYRISDDSKEIIVDSTLPAGCSFDEFTKCLPENECRYVVLDYQYKEEGAQKSKICFVAWCPDTANIKKKMMATSSKDSLRKACVGIQVEIQGTDASEVKDSCFYEKCTKI.

In terms of domain architecture, ADF-H spans 2-135 (SSGIALAPNC…KDSCFYEKCT (134 aa)).

It belongs to the actin-binding proteins ADF family.

It is found in the nucleus matrix. It localises to the cytoplasm. Its subcellular location is the cytoskeleton. Its function is as follows. Controls reversibly actin polymerization and depolymerization in a pH-sensitive manner. It has the ability to bind G- and F-actin in a 1:1 ratio of cofilin to actin. It is the major component of intranuclear and cytoplasmic actin rods. This Dictyostelium discoideum (Social amoeba) protein is Cofilin-1A (cofA).